Reading from the N-terminus, the 626-residue chain is Glyco-Gag protein (626 aa).

Residues 1 to 67 (LGDVPGTSGA…VWSRSRAARP (67 aa)) are Cytoplasmic-facing. A helical membrane pass occupies residues 68 to 86 (VCCSIVLCCFCLTVFLYLS). The Extracellular segment spans residues 87–626 (ENMGQTATTP…PQASLLTLDD (540 aa)). The N-linked (GlcNAc...) asparagine; by host glycan is linked to N113. 2 stretches are compositionally biased toward pro residues: residues 199–212 (PSAP…PLST) and 249–261 (DPPP…PPSP). Residues 199–306 (PSAPSLPPEP…STTSQAFPLR (108 aa)) are disordered. An N-linked (GlcNAc...) asparagine; by host glycan is attached at N480. 2 stretches are compositionally biased toward basic and acidic residues: residues 522–554 (RETP…EKER) and 574–607 (RQDR…DCPK). The segment at 522-626 (RETPEEREER…PQASLLTLDD (105 aa)) is disordered. The CCHC-type zinc finger occupies 590–607 (DQCAYCKEKGHWARDCPK).

Post-translationally, glycosylated by host. In terms of processing, cleaved by host near the middle of the molecule, releasing the c-terminal half containing capsid and nucleoprotein domains op GAG.

It is found in the host cell membrane. In terms of biological role, plays a role in viral particle release. Presumably acts by facilitating the fission of the virion bud at the cell surface. May prevent the antiviral activity of murine APOBEC3. This is Glyco-Gag protein from Mus musculus (Mouse).